The following is a 194-amino-acid chain: Peptidyl-tRNA hydrolase (194 aa).

Position 16 (tyrosine 16) interacts with tRNA. Histidine 21 serves as the catalytic Proton acceptor. Residues phenylalanine 67, asparagine 69, and asparagine 115 each contribute to the tRNA site.

This sequence belongs to the PTH family. As to quaternary structure, monomer.

It localises to the cytoplasm. The catalysed reaction is an N-acyl-L-alpha-aminoacyl-tRNA + H2O = an N-acyl-L-amino acid + a tRNA + H(+). Its function is as follows. Hydrolyzes ribosome-free peptidyl-tRNAs (with 1 or more amino acids incorporated), which drop off the ribosome during protein synthesis, or as a result of ribosome stalling. Functionally, catalyzes the release of premature peptidyl moieties from peptidyl-tRNA molecules trapped in stalled 50S ribosomal subunits, and thus maintains levels of free tRNAs and 50S ribosomes. The sequence is that of Peptidyl-tRNA hydrolase from Shigella boydii serotype 18 (strain CDC 3083-94 / BS512).